Consider the following 204-residue polypeptide: uncharacterized protein (204 aa).

The next 4 membrane-spanning stretches (helical) occupy residues 21–50 (AWIVFFTIPLVITPLPYVGFLAFFFILLFF), 92–114 (FFTALLYYLFTKFYAVLFFWWWF), 150–172 (LGLRWSFIGLVLLTIAVLLVLSI), and 176–198 (LLASFVVLLLSVVLAHFTAETIL).

The protein localises to the cell membrane. This is an uncharacterized protein from Aquifex aeolicus (strain VF5).